The sequence spans 137 residues: Small ribosomal subunit protein uS12 (137 aa).

Disordered regions lie at residues 1-22 (MPTI…SKSP) and 37-57 (KNPS…TPKK). Basic residues predominate over residues 9–19 (RKGRKSHKGKS). A 3-methylthioaspartic acid modification is found at D102.

Belongs to the universal ribosomal protein uS12 family. As to quaternary structure, part of the 30S ribosomal subunit. Contacts proteins S8 and S17. May interact with IF1 in the 30S initiation complex.

Its function is as follows. With S4 and S5 plays an important role in translational accuracy. Functionally, interacts with and stabilizes bases of the 16S rRNA that are involved in tRNA selection in the A site and with the mRNA backbone. Located at the interface of the 30S and 50S subunits, it traverses the body of the 30S subunit contacting proteins on the other side and probably holding the rRNA structure together. The combined cluster of proteins S8, S12 and S17 appears to hold together the shoulder and platform of the 30S subunit. This chain is Small ribosomal subunit protein uS12, found in Limosilactobacillus fermentum (strain NBRC 3956 / LMG 18251) (Lactobacillus fermentum).